The chain runs to 134 residues: Small ribosomal subunit protein uS8c (134 aa).

The protein belongs to the universal ribosomal protein uS8 family. As to quaternary structure, part of the 30S ribosomal subunit.

Its subcellular location is the plastid. The protein resides in the chloroplast. Its function is as follows. One of the primary rRNA binding proteins, it binds directly to 16S rRNA central domain where it helps coordinate assembly of the platform of the 30S subunit. In Cucumis sativus (Cucumber), this protein is Small ribosomal subunit protein uS8c (rps8).